We begin with the raw amino-acid sequence, 199 residues long: 3-isopropylmalate dehydratase small subunit (199 aa).

Belongs to the LeuD family. LeuD type 1 subfamily. In terms of assembly, heterodimer of LeuC and LeuD.

The enzyme catalyses (2R,3S)-3-isopropylmalate = (2S)-2-isopropylmalate. The protein operates within amino-acid biosynthesis; L-leucine biosynthesis; L-leucine from 3-methyl-2-oxobutanoate: step 2/4. Functionally, catalyzes the isomerization between 2-isopropylmalate and 3-isopropylmalate, via the formation of 2-isopropylmaleate. In Leifsonia xyli subsp. xyli (strain CTCB07), this protein is 3-isopropylmalate dehydratase small subunit.